The chain runs to 102 residues: Putative septation protein SpoVG (102 aa).

The tract at residues 83-102 is disordered; it reads TDEVIPDKNATSDNEESDEA.

The protein belongs to the SpoVG family.

Could be involved in septation. The protein is Putative septation protein SpoVG of Staphylococcus epidermidis (strain ATCC 35984 / DSM 28319 / BCRC 17069 / CCUG 31568 / BM 3577 / RP62A).